We begin with the raw amino-acid sequence, 251 residues long: Chromobox protein homolog 7 (251 aa).

A Chromo domain is found at 11–69 (FAVESIRKKRVRKGKVEYLVKWKGWPPKYSTWEPEEHILDPRLVMAYEEKEERDRASGY). Residues 190 to 220 (EPAAQPPEEEADADLAEGPPPWTPALPSSEV) form a disordered region. Residues 223–236 (TDITANSITVTFRE) are required for cellular lifespan extension.

As to quaternary structure, component of a PRC1-like complex. Interacts with RING1 and RNF2/RING1B, but not with BMI1, EED or EZH2. Interacts with PCGF1, PCGF2, PCGF3, PCGF5 and PCGF6.

Its subcellular location is the nucleus. In terms of biological role, component of a Polycomb group (PcG) multiprotein PRC1-like complex, a complex class required to maintain the transcriptionally repressive state of many genes, including Hox genes, throughout development. PcG PRC1 complex acts via chromatin remodeling and modification of histones; it mediates monoubiquitination of histone H2A 'Lys-119', rendering chromatin heritably changed in its expressibility. Promotes histone H3 trimethylation at 'Lys-9' (H3K9me3). Binds to trimethylated lysine residues in histones, and possibly also other proteins. Regulator of cellular lifespan by maintaining the repression of CDKN2A, but not by inducing telomerase activity. The chain is Chromobox protein homolog 7 (CBX7) from Homo sapiens (Human).